The primary structure comprises 210 residues: Ribonuclease HII (210 aa).

The RNase H type-2 domain occupies 17-206; it reads DIICGVDEAG…VRALLGGVTP (190 aa). The a divalent metal cation site is built by aspartate 23, glutamate 24, and aspartate 115.

This sequence belongs to the RNase HII family. Mn(2+) serves as cofactor. Requires Mg(2+) as cofactor.

It is found in the cytoplasm. It catalyses the reaction Endonucleolytic cleavage to 5'-phosphomonoester.. Its function is as follows. Endonuclease that specifically degrades the RNA of RNA-DNA hybrids. This Janthinobacterium sp. (strain Marseille) (Minibacterium massiliensis) protein is Ribonuclease HII.